The sequence spans 470 residues: Cysteine--tRNA ligase (470 aa).

Position 28 (C28) interacts with Zn(2+). Positions 30 to 40 match the 'HIGH' region motif; that stretch reads PTVYNYIHIGN. C212, H237, and E241 together coordinate Zn(2+). The short motif at 271–275 is the 'KMSKS' region element; the sequence is KMSKS. Position 274 (K274) interacts with ATP.

It belongs to the class-I aminoacyl-tRNA synthetase family. In terms of assembly, monomer. Zn(2+) serves as cofactor.

The protein resides in the cytoplasm. It carries out the reaction tRNA(Cys) + L-cysteine + ATP = L-cysteinyl-tRNA(Cys) + AMP + diphosphate. The polypeptide is Cysteine--tRNA ligase (Limosilactobacillus reuteri (strain DSM 20016) (Lactobacillus reuteri)).